Consider the following 484-residue polypeptide: BPI fold-containing family B member 1 (484 aa).

The N-terminal stretch at 1–21 (MAGPWTFTLLCGLLAATLIQA) is a signal peptide. Residue Asn48 is glycosylated (N-linked (GlcNAc...) asparagine). A disulfide bridge links Cys158 with Cys201. Asn264 and Asn401 each carry an N-linked (GlcNAc...) asparagine glycan.

It belongs to the BPI/LBP/Plunc superfamily. Plunc family. Detected in duodenum mucosal crypts of cholera patients, near Paneth cells (at protein level). Detected in trachea, nasal septal epithelium and lung.

The protein localises to the secreted. May play a role in innate immunity in mouth, nose and lungs. Binds bacterial lipopolysaccharide (LPS) and modulates the cellular responses to LPS. The sequence is that of BPI fold-containing family B member 1 (BPIFB1) from Homo sapiens (Human).